A 217-amino-acid polypeptide reads, in one-letter code: 3,4-dihydroxy-2-butanone 4-phosphate synthase (217 aa).

D-ribulose 5-phosphate-binding positions include 37–38 (RE), aspartate 42, 150–154 (RRGHT), and glutamate 174. A Mg(2+)-binding site is contributed by glutamate 38. Histidine 153 is a binding site for Mg(2+).

This sequence belongs to the DHBP synthase family. In terms of assembly, homodimer. It depends on Mg(2+) as a cofactor. Mn(2+) serves as cofactor.

It carries out the reaction D-ribulose 5-phosphate = (2S)-2-hydroxy-3-oxobutyl phosphate + formate + H(+). Its pathway is cofactor biosynthesis; riboflavin biosynthesis; 2-hydroxy-3-oxobutyl phosphate from D-ribulose 5-phosphate: step 1/1. Its function is as follows. Catalyzes the conversion of D-ribulose 5-phosphate to formate and 3,4-dihydroxy-2-butanone 4-phosphate. This chain is 3,4-dihydroxy-2-butanone 4-phosphate synthase, found in Shewanella baltica (strain OS223).